The following is a 309-amino-acid chain: Methionyl-tRNA formyltransferase (309 aa).

107–110 (SLLP) is a (6S)-5,6,7,8-tetrahydrofolate binding site.

It belongs to the Fmt family.

The catalysed reaction is L-methionyl-tRNA(fMet) + (6R)-10-formyltetrahydrofolate = N-formyl-L-methionyl-tRNA(fMet) + (6S)-5,6,7,8-tetrahydrofolate + H(+). In terms of biological role, attaches a formyl group to the free amino group of methionyl-tRNA(fMet). The formyl group appears to play a dual role in the initiator identity of N-formylmethionyl-tRNA by promoting its recognition by IF2 and preventing the misappropriation of this tRNA by the elongation apparatus. In Borrelia turicatae (strain 91E135), this protein is Methionyl-tRNA formyltransferase.